Consider the following 390-residue polypeptide: S-adenosylmethionine synthase 3 (390 aa).

Position 9 (Glu9) interacts with Mg(2+). Position 15 (His15) interacts with ATP. Residue Glu43 participates in K(+) binding. Positions 56 and 99 each coordinate L-methionine. ATP-binding positions include 167–169, 235–238, Asp246, 252–253, Ala269, Lys273, and Lys277; these read DGK, SGRF, and RK. Asp246 contacts L-methionine. Lys277 is an L-methionine binding site.

Belongs to the AdoMet synthase family. Homotetramer. Mn(2+) is required as a cofactor. Requires Mg(2+) as cofactor. The cofactor is Co(2+). It depends on K(+) as a cofactor. As to expression, mostly expressed in stems and leaves.

The protein localises to the cytoplasm. It catalyses the reaction L-methionine + ATP + H2O = S-adenosyl-L-methionine + phosphate + diphosphate. It functions in the pathway amino-acid biosynthesis; S-adenosyl-L-methionine biosynthesis; S-adenosyl-L-methionine from L-methionine: step 1/1. Its function is as follows. Catalyzes the formation of S-adenosylmethionine from methionine and ATP. The reaction comprises two steps that are both catalyzed by the same enzyme: formation of S-adenosylmethionine (AdoMet) and triphosphate, and subsequent hydrolysis of the triphosphate. The protein is S-adenosylmethionine synthase 3 (SAM3) of Solanum lycopersicum (Tomato).